We begin with the raw amino-acid sequence, 554 residues long: Bifunctional epoxide hydrolase 2 (554 aa).

A phosphatase region spans residues 1–224 (MALRVAAFDL…KVTGTQFPEA (224 aa)). Aspartate 9 and aspartate 11 together coordinate Mg(2+). N6-succinyllysine is present on lysine 55. Residue 123–124 (TN) coordinates phosphate. Residue lysine 176 is modified to N6-acetyllysine; alternate. Lysine 176 is modified (N6-succinyllysine; alternate). Aspartate 185 provides a ligand contact to Mg(2+). An N6-acetyllysine mark is found at lysine 191 and lysine 215. Residues 233-554 (NDVSHGYVTV…IQNPSVTSKI (322 aa)) form an epoxide hydrolase region. The AB hydrolase-1 domain occupies 257 to 530 (PAICLCHGFP…CGHWTQIEKP (274 aa)). Aspartate 333 serves as the catalytic Nucleophile. Serine 368 carries the post-translational modification Phosphoserine. Tyrosine 381 is a substrate binding site. Residues lysine 420 and lysine 454 each carry the N6-succinyllysine modification. Catalysis depends on tyrosine 465, which acts as the Proton donor. N6-succinyllysine is present on lysine 504. Cysteine 521 is lipidated: S-(15-deoxy-Delta12,14-prostaglandin J2-9-yl)cysteine. Catalysis depends on histidine 523, which acts as the Proton acceptor. Positions 552–554 (SKI) match the Microbody targeting signal motif. At lysine 553 the chain carries N6-succinyllysine.

The protein belongs to the AB hydrolase superfamily. Epoxide hydrolase family. In terms of assembly, homodimer. The cofactor is Mg(2+). In terms of processing, the covalent modification of cysteine by 15-deoxy-Delta12,14-prostaglandin-J2 is autocatalytic and reversible. It may occur as an alternative to other cysteine modifications, such as S-nitrosylation and S-palmitoylation.

Its subcellular location is the cytoplasm. The protein localises to the peroxisome. It carries out the reaction an epoxide + H2O = an ethanediol. The enzyme catalyses (9S,10S)-10-hydroxy-9-(phosphooxy)octadecanoate + H2O = (9S,10S)-9,10-dihydroxyoctadecanoate + phosphate. The catalysed reaction is 8-hydroxy-(11S,12S)-epoxy-(5Z,9E,14Z)-eicosatrienoate + H2O = (8,11R,12S)-trihydroxy-(5Z,9E,14Z)-eicosatrienoate. It catalyses the reaction 10-hydroxy-(11S,12S)-epoxy- (5Z,8Z,14Z)-eicosatrienoate + H2O = (10,11S,12R)-trihydroxy-(5Z,8Z,14Z)-eicosatrienoate. It carries out the reaction 12-phosphooxy-(9Z)-octadecenoate + H2O = 12-hydroxy-(9Z)-octadecenoate + phosphate. The enzyme catalyses 12-phosphooxy-(9E)-octadecenoate + H2O = 12-hydroxy-(9E)-octadecenoate + phosphate. The catalysed reaction is 12-(phosphooxy)octadecanoate + H2O = 12-hydroxyoctadecanoate + phosphate. It catalyses the reaction 8,9-epoxy-(5Z,11Z,14Z)-eicosatrienoate + H2O = 8,9-dihydroxy-(5Z,11Z,14Z)-eicosatrienoate. It carries out the reaction 11,12-epoxy-(5Z,8Z,14Z)-eicosatrienoate + H2O = 11,12-dihydroxy-(5Z,8Z,14Z)-eicosatrienoate. The enzyme catalyses 14,15-epoxy-(5Z,8Z,11Z)-eicosatrienoate + H2O = 14,15-dihydroxy-(5Z,8Z,11Z)-eicosatrienoate. The catalysed reaction is 9,10-epoxy-(12Z)-octadecenoate + H2O = 9,10-dihydroxy-(12Z)-octadecenoate. It catalyses the reaction 1-tetradecanoyl-sn-glycerol 3-phosphate + H2O = 1-tetradecanoyl-sn-glycerol + phosphate. It carries out the reaction 1-octadecanoyl-sn-glycero-3-phosphate + H2O = 1-octadecanoyl-sn-glycerol + phosphate. The enzyme catalyses 1-(5Z,8Z,11Z,14Z-eicosatetraenoyl)-sn-glycero-3-phosphate + H2O = 1-(5Z,8Z,11Z,14Z-eicosatetraenoyl)-sn-glycerol + phosphate. The catalysed reaction is 1-hexadecanoyl-sn-glycero-3-phosphate + H2O = 1-hexadecanoyl-sn-glycerol + phosphate. It catalyses the reaction 1-(9Z-octadecenoyl)-sn-glycero-3-phosphate + H2O = 1-(9Z-octadecenoyl)-sn-glycerol + phosphate. It carries out the reaction (8S,9R)-epoxy-(5Z,11Z,14Z)-eicosatrienoate + H2O = (8S,9S)-dihydroxy-(5Z,11Z,14Z)-eicosatrienoate. The enzyme catalyses (11S,12R)-epoxy-(5Z,8Z,14Z)-eicosatrienoate + H2O = (11R,12R)-dihydroxy-(5Z,8Z,14Z)-eicosatrienoate. The catalysed reaction is (11S,12R)-epoxy-(5Z,8Z,14Z)-eicosatrienoate + H2O = (11S,12S)-dihydroxy-(5Z,8Z,14Z)-eicosatrienoate. It catalyses the reaction (14S,15R)-epoxy-(5Z,8Z,11Z)-eicosatrienoate + H2O = (14R,15R)-dihydroxy-(5Z,8Z,11Z)-eicosatrienoate. It carries out the reaction (14S,15R)-epoxy-(5Z,8Z,11Z)-eicosatrienoate + H2O = (14S,15S)-dihydroxy-(5Z,8Z,11Z)-eicosatrienoate. The enzyme catalyses (11R,12S)-epoxy-(5Z,8Z,14Z)-eicosatrienoate + H2O = (11S,12S)-dihydroxy-(5Z,8Z,14Z)-eicosatrienoate. The catalysed reaction is (11R,12S)-epoxy-(5Z,8Z,14Z)-eicosatrienoate + H2O = (11R,12R)-dihydroxy-(5Z,8Z,14Z)-eicosatrienoate. It catalyses the reaction (8S,9R)-epoxy-(5Z,11Z,14Z)-eicosatrienoate + H2O = (8R,9R)-dihydroxy-(5Z,11Z,14Z)-eicosatrienoate. It carries out the reaction (14R,15S)-epoxy-(5Z,8Z,11Z)-eicosatrienoate + H2O = (14R,15R)-dihydroxy-(5Z,8Z,11Z)-eicosatrienoate. With respect to regulation, inhibited by 1-(1-acetylpiperidin-4-yl)-3-(4-(trifl uoromethoxy)phenyl)urea (TPAU), 1-cyclohexyl-3-dodecylurea (CDU), 12-(3-adamantan-1-yl-ureido)-dodecanoic acid (AUDA), 1-((3S, 5S, 7S)-adamantan-1-yl)-3-(5-(2-(2-ethoxyethoxy) ethoxy)pentyl)urea (AEPU), N-adamantyl-N[']-cyclohexyl urea (ACU), 4-(((1S, 4S)-4-(3-((3S, 5S, 7S)-adamantan-1-yl) ureido)cyclohexyl)oxy)benzoic acid (c-AUCB), 4-(((1R, 4R)-4-(3-((3S, 5S, 7S)-adamantan-1-yl)ureido)cyclohexyl)oxy)benzoic acid (t-AUCB), 4-(((1R, 4R)-4-(3-(4(trifluoromethoxy)phenyl)ureido)cyclohexyl)oxy)benzoic acid (t-TAUCB) and to a lesser extent by 8-(3-((3S, 5S, 7S)-adamantan-1-yl)ureido) octanoic acid (AUOA). Phosphatase activity is inhibited by dodecyl-phosphate, phospholipids such as phospho-lysophosphatidic acids and fatty acids such as palmitic acid and lauric acid. In terms of biological role, bifunctional enzyme. The C-terminal domain has epoxide hydrolase activity and acts on epoxides (alkene oxides, oxiranes) and arene oxides. Plays a role in xenobiotic metabolism by degrading potentially toxic epoxides. Also determines steady-state levels of physiological mediators. The N-terminal domain has lipid phosphatase activity, with the highest activity towards threo-9,10-phosphonooxy-hydroxy-octadecanoic acid, followed by erythro-9,10-phosphonooxy-hydroxy-octadecanoic acid, 12-phosphonooxy-octadec-9Z-enoic acid and 12-phosphonooxy-octadec-9E-enoic acid. Bifunctional enzyme. The C-terminal domain has epoxide hydrolase activity and acts on epoxides (alkene oxides, oxiranes) and arene oxides. Plays a role in xenobiotic metabolism by degrading potentially toxic epoxides. Also determines steady-state levels of physiological mediators. Its function is as follows. Bifunctional enzyme. The N-terminal domain has lipid phosphatase activity, with the highest activity towards threo-9,10-phosphonooxy-hydroxy-octadecanoic acid, followed by erythro-9,10-phosphonooxy-hydroxy-octadecanoic acid, 12-phosphonooxy-octadec-9Z-enoic acid and 12-phosphonooxy-octadec-9E-enoic acid. Has phosphatase activity toward lyso-glycerophospholipids with also some lower activity toward lysolipids of sphingolipid and isoprenoid phosphates. The protein is Bifunctional epoxide hydrolase 2 of Rattus norvegicus (Rat).